A 468-amino-acid chain; its full sequence is FAD-linked oxidoreductase hasG (468 aa).

The FAD-binding PCMH-type domain maps to 37–211 (LGKIPAAVVQ…VEATFRAYPW (175 aa)).

This sequence belongs to the oxygen-dependent FAD-linked oxidoreductase family. FAD is required as a cofactor.

It participates in secondary metabolite biosynthesis. Its function is as follows. FAD-linked oxidoreductase; part of the gene cluster that mediates the biosynthesis of hexadehydro-astechrome (HAS), a tryptophan-derived iron(III)-complex that acts as a virulence factor in infected mice. Within the pathway, hasG converts the prenyl to a methylbutadienyl side chain. The HAS biosynthesis begins with the synthesis of a tethered Trp-Ala dipeptide by the NRPS hasD. The 7-dimethylallyltryptophan synthase hasE then catalyzes the prenylation of the hasD-tethered tryptophan or the resulting tethered Trp-Ala dipeptide at the C-7 position of the indole moiety. HAS biosynthesis continues via tethered intermediates with the succesive actions of the cytochrome P450 monooxygenase hasH, the O-methyltransferase hasC, and the FAD-linked oxidoreductase hasG. The resulting O-methylated diketopiperazine is then released from hasD. Finally, three O-methylated diketopiperazine molecules assemble in a trimeric complex with Fe(III) to produce hexadehydro-astechrome. This is FAD-linked oxidoreductase hasG from Aspergillus fumigatus (strain CBS 144.89 / FGSC A1163 / CEA10) (Neosartorya fumigata).